A 350-amino-acid chain; its full sequence is uncharacterized protein (350 aa).

May play a role in septum formation. This is an uncharacterized protein from Mycobacterium tuberculosis (strain CDC 1551 / Oshkosh).